Here is a 180-residue protein sequence, read N- to C-terminus: Regulator of G-protein signaling 8 (180 aa).

The residue at position 26 (S26) is a Phosphoserine. The region spanning 56 to 171 is the RGS domain; sequence SFDVLLSHKY…FLRSKMYLDL (116 aa).

Interacts with GNAO1. Interacts with GNAI3.

Its subcellular location is the cell membrane. The protein localises to the membrane. It localises to the perikaryon. The protein resides in the cell projection. It is found in the dendrite. Its subcellular location is the nucleus. In terms of biological role, regulates G protein-coupled receptor signaling cascades, including signaling via muscarinic acetylcholine receptor CHRM2 and dopamine receptor DRD2. Inhibits signal transduction by increasing the GTPase activity of G protein alpha subunits, thereby driving them into their inactive GDP-bound form. Modulates the activity of potassium channels that are activated in response to DRD2 and CHRM2 signaling. The polypeptide is Regulator of G-protein signaling 8 (RGS8) (Homo sapiens (Human)).